A 425-amino-acid chain; its full sequence is Glutamyl-tRNA reductase (425 aa).

Residues 49-52, Ser106, 111-113, and Gln117 each bind substrate; these read TCNR and EPQ. Catalysis depends on Cys50, which acts as the Nucleophile. 186 to 191 lines the NADP(+) pocket; the sequence is GAGETI.

This sequence belongs to the glutamyl-tRNA reductase family. As to quaternary structure, homodimer.

The enzyme catalyses (S)-4-amino-5-oxopentanoate + tRNA(Glu) + NADP(+) = L-glutamyl-tRNA(Glu) + NADPH + H(+). Its pathway is porphyrin-containing compound metabolism; protoporphyrin-IX biosynthesis; 5-aminolevulinate from L-glutamyl-tRNA(Glu): step 1/2. Its function is as follows. Catalyzes the NADPH-dependent reduction of glutamyl-tRNA(Glu) to glutamate 1-semialdehyde (GSA). This chain is Glutamyl-tRNA reductase, found in Saccharophagus degradans (strain 2-40 / ATCC 43961 / DSM 17024).